Consider the following 68-residue polypeptide: Small ribosomal subunit protein bS21 (68 aa).

This sequence belongs to the bacterial ribosomal protein bS21 family.

This is Small ribosomal subunit protein bS21 from Ruegeria sp. (strain TM1040) (Silicibacter sp.).